The primary structure comprises 213 residues: Kynurenine formamidase (213 aa).

Position 18 (tryptophan 18) interacts with substrate. Residues histidine 48, histidine 52, and aspartate 54 each coordinate Zn(2+). Histidine 58 (proton donor/acceptor) is an active-site residue. Histidine 160 and glutamate 172 together coordinate Zn(2+).

The protein belongs to the Cyclase 1 superfamily. KynB family. Homodimer. Requires Zn(2+) as cofactor.

It carries out the reaction N-formyl-L-kynurenine + H2O = L-kynurenine + formate + H(+). The protein operates within amino-acid degradation; L-tryptophan degradation via kynurenine pathway; L-kynurenine from L-tryptophan: step 2/2. In terms of biological role, catalyzes the hydrolysis of N-formyl-L-kynurenine to L-kynurenine, the second step in the kynurenine pathway of tryptophan degradation. This is Kynurenine formamidase from Burkholderia thailandensis (strain ATCC 700388 / DSM 13276 / CCUG 48851 / CIP 106301 / E264).